The chain runs to 448 residues: UDP-glucose 6-dehydrogenase (448 aa).

NAD(+)-binding positions include 2–19, Val-11, Asp-30, Lys-35, Thr-121, and Glu-152; that span reads NITFIGSGYVGLVSGIIM. Residues 148-152, Lys-204, Asn-208, 249-253, and Gly-257 contribute to the substrate site; these read EFLRE and FLNAG. Cys-260 (nucleophile) is an active-site residue. Lys-263 contributes to the NAD(+) binding site. Residue Lys-321 participates in substrate binding. Position 328 (Arg-328) interacts with NAD(+).

The protein belongs to the UDP-glucose/GDP-mannose dehydrogenase family.

It catalyses the reaction UDP-alpha-D-glucose + 2 NAD(+) + H2O = UDP-alpha-D-glucuronate + 2 NADH + 3 H(+). It participates in nucleotide-sugar biosynthesis; UDP-alpha-D-glucuronate biosynthesis; UDP-alpha-D-glucuronate from UDP-alpha-D-glucose: step 1/1. This chain is UDP-glucose 6-dehydrogenase (udg), found in Rickettsia felis (strain ATCC VR-1525 / URRWXCal2) (Rickettsia azadi).